A 162-amino-acid chain; its full sequence is MFDIGFLEIIVIMVIALIVIGPERMPEVARKIGQFMGKTKRFINSMKENSEITETVRDLQNSMNLEEEKRNLESVSDTLHDDFSKIQDEFGIDQEISRPFDADEPTAFSGTQFNKAPTQPKMPTTEESPSSTPETSTKETEKTSTSDVSAPSESTPESSNKS.

Residues 1–21 (MFDIGFLEIIVIMVIALIVIG) form a helical membrane-spanning segment. A disordered region spans residues 86-162 (IQDEFGIDQE…ESTPESSNKS (77 aa)). A compositionally biased stretch (polar residues) spans 108-117 (FSGTQFNKAP). The span at 123–135 (PTTEESPSSTPET) shows a compositional bias: low complexity. Residues 147–162 (DVSAPSESTPESSNKS) show a composition bias toward polar residues.

The protein belongs to the TatB family. In terms of assembly, the Tat system comprises two distinct complexes: a TatABC complex, containing multiple copies of TatA, TatB and TatC subunits, and a separate TatA complex, containing only TatA subunits. Substrates initially bind to the TatABC complex, which probably triggers association of the separate TatA complex to form the active translocon.

The protein localises to the cell inner membrane. Its function is as follows. Part of the twin-arginine translocation (Tat) system that transports large folded proteins containing a characteristic twin-arginine motif in their signal peptide across membranes. Together with TatC, TatB is part of a receptor directly interacting with Tat signal peptides. TatB may form an oligomeric binding site that transiently accommodates folded Tat precursor proteins before their translocation. The chain is Sec-independent protein translocase protein TatB from Hydrogenovibrio crunogenus (strain DSM 25203 / XCL-2) (Thiomicrospira crunogena).